Consider the following 151-residue polypeptide: UPF0208 membrane protein YPTB2595 (151 aa).

Helical transmembrane passes span 46 to 66 (FGIR…IALG) and 69 to 89 (LGPA…GLWW).

This sequence belongs to the UPF0208 family.

It is found in the cell inner membrane. This Yersinia pseudotuberculosis serotype I (strain IP32953) protein is UPF0208 membrane protein YPTB2595.